We begin with the raw amino-acid sequence, 348 residues long: Anthranilate phosphoribosyltransferase (348 aa).

5-phospho-alpha-D-ribose 1-diphosphate is bound by residues glycine 87, 90–91 (GD), threonine 95, 97–100 (NIST), 115–123 (KHGNRSASG), and serine 127. Glycine 87 contacts anthranilate. Serine 99 serves as a coordination point for Mg(2+). Asparagine 118 serves as a coordination point for anthranilate. Anthranilate is bound at residue arginine 173. Positions 232 and 233 each coordinate Mg(2+).

The protein belongs to the anthranilate phosphoribosyltransferase family. In terms of assembly, homodimer. Requires Mg(2+) as cofactor.

It catalyses the reaction N-(5-phospho-beta-D-ribosyl)anthranilate + diphosphate = 5-phospho-alpha-D-ribose 1-diphosphate + anthranilate. It functions in the pathway amino-acid biosynthesis; L-tryptophan biosynthesis; L-tryptophan from chorismate: step 2/5. Its function is as follows. Catalyzes the transfer of the phosphoribosyl group of 5-phosphorylribose-1-pyrophosphate (PRPP) to anthranilate to yield N-(5'-phosphoribosyl)-anthranilate (PRA). The sequence is that of Anthranilate phosphoribosyltransferase from Synechococcus sp. (strain CC9311).